The following is a 93-amino-acid chain: MVFGSAASEKTPEEILKGVALMLDEIINDTTVPRNIRAAAEKAKEAVLKEGEEPIVRSATAIHILDEISNDPNMPLHTRTQIWSIVSELERVK.

It belongs to the UPF0147 family.

The protein is UPF0147 protein MJ1419 of Methanocaldococcus jannaschii (strain ATCC 43067 / DSM 2661 / JAL-1 / JCM 10045 / NBRC 100440) (Methanococcus jannaschii).